Reading from the N-terminus, the 250-residue chain is DNA polymerase sliding clamp (250 aa).

Belongs to the PCNA family. In terms of assembly, homotrimer. The subunits circularize to form a toroid; DNA passes through its center. Replication factor C (RFC) is required to load the toroid on the DNA.

In terms of biological role, sliding clamp subunit that acts as a moving platform for DNA processing. Responsible for tethering the catalytic subunit of DNA polymerase and other proteins to DNA during high-speed replication. The protein is DNA polymerase sliding clamp of Methanococcus maripaludis (strain C7 / ATCC BAA-1331).